A 1832-amino-acid polypeptide reads, in one-letter code: Zinc finger SWIM domain-containing protein 8 (1832 aa).

Ser-36, Ser-48, and Ser-53 each carry phosphoserine. Residues 45 to 67 (RKQSAGPNSPTGGGGGGGSGGTR) are disordered. Positions 55–65 (TGGGGGGGSGG) are enriched in gly residues. The SWIM-type zinc-finger motif lies at 172–208 (YNVAVMFDRCRVTSCSCTCGAGAKWCTHVVALCLFRI). Phosphoserine is present on residues Ser-437 and Ser-564. Disordered regions lie at residues 516–722 (PGAS…VGEE), 800–821 (NPPD…VSTS), and 1018–1216 (SQTH…TVDV). Basic and acidic residues predominate over residues 563-572 (LSAEGGDKAL). The segment covering 1021 to 1042 (HKPQTLSSFYSSSRPATANQRS) has biased composition (polar residues). Positions 1121–1132 (SRGGYNGRGWGS) are enriched in gly residues. Thr-1141 is subject to Phosphothreonine. Residues 1146–1161 (IDSSAPETTSDSSPTL) are compositionally biased toward polar residues. 3 positions are modified to phosphoserine: Ser-1155, Ser-1158, and Ser-1162. The segment covering 1176-1211 (GRGQDSDSISSSSSDSLGSSSSSGSRRASASGGARA) has biased composition (low complexity). A Phosphoserine modification is found at Ser-1270. Polar residues predominate over residues 1435–1446 (STAREGATSCSG). Positions 1435-1465 (STAREGATSCSGSGMRAAGEAGRGLPEGRGA) are disordered. The span at 1455-1465 (AGRGLPEGRGA) shows a compositional bias: gly residues. The residue at position 1831 (Ser-1831) is a Phosphoserine.

Belongs to the ZSWIM8 family. Component of the SCF-like E3 ubiquitin-protein ligase complex which contains CUL3, RBX1, ELOB, ELOC and ZSWIM8. Interacts with DAB1.

The protein resides in the cytoplasm. The protein localises to the cytosol. The protein operates within protein modification; protein ubiquitination. In terms of biological role, substrate recognition component of a SCF-like E3 ubiquitin-protein ligase complex that promotes target-directed microRNA degradation (TDMD), a process that mediates degradation of microRNAs (miRNAs). The SCF-like E3 ubiquitin-protein ligase complex acts by catalyzing ubiquitination and subsequent degradation of AGO proteins (AGO1, AGO2, AGO3 and/or AGO4), thereby exposing miRNAs for degradation. Specifically recognizes and binds AGO proteins when they are engaged with a TDMD target. May also acts as a regulator of axon guidance: specifically recognizes misfolded ROBO3 and promotes its ubiquitination and subsequent degradation. Plays an essential role for proper embryonic development of heart and lung. Controls protein quality of DAB1, a key signal molecule for brain development, thus protecting its signaling strength. Mechanistically, recognizes intrinsically disordered regions of DAB1 and eliminates misfolded DAB1 that cannot be properly phosphorylated. This is Zinc finger SWIM domain-containing protein 8 from Mus musculus (Mouse).